Consider the following 385-residue polypeptide: Protein delta homolog 1 (385 aa).

An N-terminal signal peptide occupies residues 1–23 (MIATGALLRVLLLLLAFGHSTYG). EGF-like domains are found at residues 24-55 (AECDPPCDPQYGFCEADNVCRCHVGWEGPLCD), 53-86 (LCDKCVTAPGCVNGVCKEPWQCICKDGWDGKFCE), 88-125 (DVRACTSTPCANNGTCVDLEKGQYECSCTPGFSGKDCQ), 127-168 (KAGP…NFCE), 172-208 (ATNSCTPNPCENDGVCTDIGGDFRCRCPAGFVDKTCS), and 210-247 (PVSNCASGPCQNGGTCLQHTQVSFECLCKPPFMGPTCA). Topologically, residues 24–305 (AECDPPCDPQ…KSTPLLTEGQ (282 aa)) are extracellular. Intrachain disulfides connect C26–C37, C30–C43, C45–C54, C57–C68, C63–C74, C76–C85, C92–C103, C97–C113, C115–C124, C131–C144, C138–C156, and C158–C167. S94 carries an O-linked (GalNAc...) serine glycan. An N-linked (GlcNAc...) asparagine glycan is attached at N100. A glycan (N-linked (GlcNAc...) asparagine; atypical; partial) is linked at N165. Residue N174 is glycosylated (N-linked (GlcNAc...) asparagine; atypical). 6 cysteine pairs are disulfide-bonded: C176/C187, C181/C196, C198/C207, C214/C225, C219/C235, and C237/C246. An O-linked (GalNAc...) serine glycan is attached at S216. T224 is a glycosylation site (O-linked (GalNAc...) threonine). A glycan (O-linked (GalNAc...) threonine) is linked at T258. T267 is a glycosylation site (O-linked (GalNAc...) threonine; partial). The O-linked (GalNAc...) threonine glycan is linked to T271. Residue N295 is glycosylated (N-linked (GlcNAc...) asparagine). Residues 306–329 (AICFTILGVLTSLVVLGTVAIVFL) traverse the membrane as a helical segment. Over 330–385 (NKCETWVSNLRYNHTFRKKKNLLLQYNSGEELAVNIIFPEKIDMTTFNKEAGDEEI) the chain is Cytoplasmic.

As to quaternary structure, monomer. Interacts with SH3RF2. N- and O-glycosylated. As to expression, highly expressed in fetal liver, placenta, adult adrenal gland, brain, testis and ovary and, to a lesser degree, in adult kidney, muscle, thymus and heart.

It localises to the membrane. The protein localises to the cytoplasm. Its function is as follows. May have a role in neuroendocrine differentiation. Inhibits adipocyte differentiation. The protein is Protein delta homolog 1 (Dlk1) of Mus musculus (Mouse).